The following is a 427-amino-acid chain: Imidazolonepropionase (427 aa).

2 residues coordinate Fe(3+): histidine 78 and histidine 80. Zn(2+)-binding residues include histidine 78 and histidine 80. Residues arginine 87, tyrosine 150, and histidine 183 each coordinate 4-imidazolone-5-propanoate. Tyrosine 150 provides a ligand contact to N-formimidoyl-L-glutamate. Histidine 255 serves as a coordination point for Fe(3+). Histidine 255 is a binding site for Zn(2+). Glutamate 258 is a 4-imidazolone-5-propanoate binding site. Position 330 (aspartate 330) interacts with Fe(3+). Zn(2+) is bound at residue aspartate 330. N-formimidoyl-L-glutamate-binding residues include asparagine 332 and glycine 334. A 4-imidazolone-5-propanoate-binding site is contributed by threonine 335.

Belongs to the metallo-dependent hydrolases superfamily. HutI family. It depends on Zn(2+) as a cofactor. Fe(3+) is required as a cofactor.

The protein resides in the cytoplasm. It catalyses the reaction 4-imidazolone-5-propanoate + H2O = N-formimidoyl-L-glutamate. Its pathway is amino-acid degradation; L-histidine degradation into L-glutamate; N-formimidoyl-L-glutamate from L-histidine: step 3/3. Catalyzes the hydrolytic cleavage of the carbon-nitrogen bond in imidazolone-5-propanoate to yield N-formimidoyl-L-glutamate. It is the third step in the universal histidine degradation pathway. This Herpetosiphon aurantiacus (strain ATCC 23779 / DSM 785 / 114-95) protein is Imidazolonepropionase.